A 176-amino-acid polypeptide reads, in one-letter code: Shikimate kinase (176 aa).

Position 12 to 17 (12 to 17) interacts with ATP; it reads GSGKST. A Mg(2+)-binding site is contributed by Ser-16. Residues Asp-34, Arg-58, and Gly-80 each coordinate substrate. An ATP-binding site is contributed by Arg-117. Arg-136 is a substrate binding site. Arg-153 is an ATP binding site.

Belongs to the shikimate kinase family. In terms of assembly, monomer. Requires Mg(2+) as cofactor.

It is found in the cytoplasm. The catalysed reaction is shikimate + ATP = 3-phosphoshikimate + ADP + H(+). Its pathway is metabolic intermediate biosynthesis; chorismate biosynthesis; chorismate from D-erythrose 4-phosphate and phosphoenolpyruvate: step 5/7. Its function is as follows. Catalyzes the specific phosphorylation of the 3-hydroxyl group of shikimic acid using ATP as a cosubstrate. The sequence is that of Shikimate kinase from Mycobacterium bovis (strain ATCC BAA-935 / AF2122/97).